Reading from the N-terminus, the 619-residue chain is 1-deoxy-D-xylulose-5-phosphate synthase (619 aa).

Thiamine diphosphate-binding positions include His-74 and 115 to 117 (GHS). Residue Asp-146 participates in Mg(2+) binding. Thiamine diphosphate contacts are provided by residues 147-148 (GA), Asn-175, Tyr-285, and Glu-365. Asn-175 is a Mg(2+) binding site.

This sequence belongs to the transketolase family. DXPS subfamily. In terms of assembly, homodimer. The cofactor is Mg(2+). It depends on thiamine diphosphate as a cofactor.

The catalysed reaction is D-glyceraldehyde 3-phosphate + pyruvate + H(+) = 1-deoxy-D-xylulose 5-phosphate + CO2. The protein operates within metabolic intermediate biosynthesis; 1-deoxy-D-xylulose 5-phosphate biosynthesis; 1-deoxy-D-xylulose 5-phosphate from D-glyceraldehyde 3-phosphate and pyruvate: step 1/1. Functionally, catalyzes the acyloin condensation reaction between C atoms 2 and 3 of pyruvate and glyceraldehyde 3-phosphate to yield 1-deoxy-D-xylulose-5-phosphate (DXP). This chain is 1-deoxy-D-xylulose-5-phosphate synthase, found in Clostridium perfringens (strain ATCC 13124 / DSM 756 / JCM 1290 / NCIMB 6125 / NCTC 8237 / Type A).